The chain runs to 152 residues: Protein Smg homolog (152 aa).

The protein belongs to the Smg family.

This is Protein Smg homolog from Nitrosomonas eutropha (strain DSM 101675 / C91 / Nm57).